The following is a 1167-amino-acid chain: Integrin alpha-10 (1167 aa).

The signal sequence occupies residues 1-22 (MELPFVTHLFLPLVFLTGLCSP). The Extracellular segment spans residues 23 to 1122 (FNLDEHHPRL…VVQTRPILIS (1100 aa)). FG-GAP repeat units lie at residues 24 to 85 (NLDE…HNAP) and 95 to 154 (QLGN…PQGS). The cysteines at positions 76 and 86 are disulfide-linked. N-linked (GlcNAc...) asparagine glycans are attached at residues Asn-98, Asn-234, Asn-336, and Asn-364. The VWFA domain occupies 167–350 (DVVIVLDGSN…AALTDIVDAL (184 aa)). FG-GAP repeat units lie at residues 361–412 (HAEN…LFPP), 417–470 (EDEF…KDGA), 472–534 (RVAQ…SLLT), 535–593 (LQGT…GVRP), and 597–657 (QRIA…VTPQ). Residues Asp-494, Asp-496, Asp-498, Asp-502, Asp-558, Asn-560, Asp-562, Asp-566, Asp-620, Asp-622, Asp-624, and Asp-628 each contribute to the Ca(2+) site. 2 cysteine pairs are disulfide-bonded: Cys-666/Cys-675 and Cys-681/Cys-736. N-linked (GlcNAc...) asparagine glycans are attached at residues Asn-733 and Asn-763. Cys-789 and Cys-795 form a disulfide bridge. N-linked (GlcNAc...) asparagine glycans are attached at residues Asn-839, Asn-921, Asn-1011, Asn-1018, and Asn-1039. A helical transmembrane segment spans residues 1123–1145 (LWILIGSVLGGLLLLALLVFCLW). Over 1146-1167 (KLGFFAHKKIPEEEKREEKLEQ) the chain is Cytoplasmic.

This sequence belongs to the integrin alpha chain family. As to quaternary structure, heterodimer of an alpha and a beta subunit. Alpha-10 associates with beta-1. Widely expressed with highest expression in muscle and heart. Found in articular cartilage.

It localises to the membrane. In terms of biological role, integrin alpha-10/beta-1 is a receptor for collagen. The protein is Integrin alpha-10 (ITGA10) of Homo sapiens (Human).